The chain runs to 1274 residues: RNA-directed RNA polymerase VP2 (1274 aa).

Residues 561–798 (LSTTSGSVVT…KLYALMGCRI (238 aa)) enclose the RdRp catalytic domain.

The protein belongs to the reoviridae RNA-directed RNA polymerase family.

The protein resides in the virion. The enzyme catalyses RNA(n) + a ribonucleoside 5'-triphosphate = RNA(n+1) + diphosphate. RNA-directed RNA polymerase that is involved in transcription and genome replication. Following infection, it catalyzes the synthesis of fully conservative plus strands. After core assembly, which consists in recruitment of one capped plus-strand for each genomic segments and polymerase complexes, the polymerase switches mode and catalyzes the synthesis of complementary minus-strands. This chain is RNA-directed RNA polymerase VP2 (S2), found in Aquareovirus C (isolate Golden shiner/USA/GSRV/1977) (AQRV-C).